The primary structure comprises 604 residues: Protein CBFA2T1 (604 aa).

Positions 32-114 are disordered; the sequence is TEKHSTMPDS…SSSSLANQQL (83 aa). Phosphoserine is present on Ser-41. The span at 63 to 86 shows a compositional bias: polar residues; it reads QGAPRTSSFTPTTLTNGTSHSPTA. The segment covering 95-114 has biased composition (low complexity); the sequence is NGFSNGPSSSSSSSLANQQL. The 96-residue stretch at 120-215 folds into the TAFH domain; the sequence is ARQLSKLKRF…NPAQYLAQHE (96 aa). Residues 230-298 are disordered; sequence SELLLDVNEN…LPHPTPPPPQ (69 aa). Residues 238 to 264 show a composition bias toward basic and acidic residues; it reads ENGKRRTPDRTKENGFDREPLHSEHPS. Over residues 271–285 the composition is skewed to polar residues; it reads SPGQRYSPNNGLSYQ. Residues 289–298 show a composition bias toward pro residues; that stretch reads LPHPTPPPPQ. An important for oligomerization region spans residues 337-383; it reads QEEMIDHRLTDREWAEEWKHLDHLLNCIMDMVEKTRRSLTVLRRCQE. The interval 337–383 is nervy homology region 2 (NHR2); that stretch reads QEEMIDHRLTDREWAEEWKHLDHLLNCIMDMVEKTRRSLTVLRRCQE. Residues 401–423 are disordered; the sequence is DLKKGGGSSSSHSRQQSPVNPDP. A Phosphoserine modification is found at Ser-417. The tract at residues 443–492 is nervy homology region 3 (NHR3); the sequence is EEIWKKAEEAVNEVKRQAMTELQKAVSEAERKAHDMITTERAKMERTVAE. Cys-515, Cys-518, Cys-526, Cys-529, Cys-535, Cys-539, His-547, and Cys-551 together coordinate Zn(2+). Residues 515-551 form an MYND-type zinc finger; it reads CWNCGRKASETCSGCNTARYCGSFCQHKDWEKHHHIC. Residues 557–576 show a composition bias toward polar residues; that stretch reads AQQQGDTPAVSSSVTPNSGA. The segment at 557-604 is disordered; sequence AQQQGDTPAVSSSVTPNSGAGSPMDTPPAATPRSTTPGTPSTIETTPR. Low complexity predominate over residues 587 to 604; that stretch reads TPRSTTPGTPSTIETTPR.

This sequence belongs to the CBFA2T family. In terms of assembly, homooligomer. Homotetramerization is mediated by nervy homology region 2 (NRH2). Can interact with CBFA2T2 and CBFA2T3; heterotetramerization between members of the CBFA2T family is proposed. Interacts with TCF12, SIN3A, HDAC1, HDAC2, HDAC3, NCOR1, NCOR2. Interacts with ATN1 (via its N-terminus); the interaction enhances the transcriptional repression. Interacts (via its N-terminus) with ZBTB16; the interaction increases the transcription repression activity of ZBTB16. AML1-MTG8/ETO fusion protein interacts with CBFB. AML1-MTG8/ETO is part of a stable transcription factor complex AETFC in leukemic cells; AETFC formation seems to be involved in recruitment of EP300. AML1-MTG8/ETO nervy homology region 2-mediated oligomerization is proposed to be homotypic, required for AML1-MTG8/ETO-mediated transformation of primary hematopoietic cells and is required for AML1-MTG8/ETO interaction with TCF12. Most abundantly expressed in brain. Lower levels in lung, heart, testis and ovary.

It is found in the nucleus. Functionally, transcriptional corepressor which facilitates transcriptional repression via its association with DNA-binding transcription factors and recruitment of other corepressors and histone-modifying enzymes. Can repress the expression of MMP7 in a ZBTB33-dependent manner. Can repress transactivation mediated by TCF12. Acts as a negative regulator of adipogenesis. The AML1-MTG8/ETO fusion protein frequently found in leukemic cells is involved in leukemogenesis and contributes to hematopoietic stem/progenitor cell self-renewal. The protein is Protein CBFA2T1 (RUNX1T1) of Homo sapiens (Human).